The sequence spans 252 residues: 5'-nucleotidase SurE (252 aa).

Residues D8, D9, S39, and N91 each coordinate a divalent metal cation.

This sequence belongs to the SurE nucleotidase family. A divalent metal cation is required as a cofactor.

The protein resides in the cytoplasm. The enzyme catalyses a ribonucleoside 5'-phosphate + H2O = a ribonucleoside + phosphate. In terms of biological role, nucleotidase that shows phosphatase activity on nucleoside 5'-monophosphates. This Gemmatimonas aurantiaca (strain DSM 14586 / JCM 11422 / NBRC 100505 / T-27) protein is 5'-nucleotidase SurE.